Reading from the N-terminus, the 292-residue chain is Protease HtpX homolog (292 aa).

2 helical membrane passes run 7–27 (TFILMAALTALVMGMGGLIGG) and 29–49 (GGAVIALAIAGAGNLFAWWNS). Histidine 131 is a Zn(2+) binding site. Residue glutamate 132 is part of the active site. Histidine 135 is a binding site for Zn(2+). Helical transmembrane passes span 148 to 168 (ATMAGAIAMLGNMLMFSSMFG) and 178 to 198 (LAAILAMIFAPMAAGLVQMAI). Glutamate 203 contributes to the Zn(2+) binding site.

Belongs to the peptidase M48B family. The cofactor is Zn(2+).

The protein resides in the cell inner membrane. This chain is Protease HtpX homolog, found in Paracoccus denitrificans (strain Pd 1222).